The following is an 870-amino-acid chain: Phenylalanine--tRNA ligase beta subunit (870 aa).

The tRNA-binding domain maps to 39-148 (AADLQKFEVA…EDAVVGEPFT (110 aa)). Positions 427–551 (PAKKTLDFPA…RIYGYDKIES (125 aa)) constitute a B5 domain. In terms of domain architecture, RPE1 insert spans 450 to 498 (LLHNEANKGEFVGNTEHSIAAYKEVREDASTGLTPKLPLEASYVKGLNI). Mg(2+) is bound by residues aspartate 529, aspartate 535, glutamate 538, and glutamate 539. The 94-residue stretch at 776–869 (SDYQANFRDY…IEQKFQGTLR (94 aa)) folds into the FDX-ACB domain.

The protein belongs to the phenylalanyl-tRNA synthetase beta subunit family. Type 1 subfamily. In terms of assembly, tetramer of two alpha and two beta subunits. Mg(2+) serves as cofactor.

Its subcellular location is the cytoplasm. It carries out the reaction tRNA(Phe) + L-phenylalanine + ATP = L-phenylalanyl-tRNA(Phe) + AMP + diphosphate + H(+). The polypeptide is Phenylalanine--tRNA ligase beta subunit (pheT) (Rickettsia bellii (strain RML369-C)).